The chain runs to 280 residues: Protein MGF 505-3R (280 aa).

It belongs to the asfivirus MGF 505 family.

Plays a role in virus cell tropism, and may be required for efficient virus replication in macrophages. The protein is Protein MGF 505-3R of Ornithodoros (relapsing fever ticks).